The following is a 168-amino-acid chain: tRNA-splicing endonuclease (168 aa).

Active-site residues include tyrosine 107, histidine 114, and lysine 145.

The protein belongs to the tRNA-intron endonuclease family. Archaeal short subfamily. Homotetramer; although the tetramer contains four active sites, only two participate in the cleavage. Therefore, it should be considered as a dimer of dimers.

It carries out the reaction pretRNA = a 3'-half-tRNA molecule with a 5'-OH end + a 5'-half-tRNA molecule with a 2',3'-cyclic phosphate end + an intron with a 2',3'-cyclic phosphate and a 5'-hydroxyl terminus.. Its function is as follows. Endonuclease that removes tRNA introns. Cleaves pre-tRNA at the 5'- and 3'-splice sites to release the intron. The products are an intron and two tRNA half-molecules bearing 2',3' cyclic phosphate and 5'-OH termini. Recognizes a pseudosymmetric substrate in which 2 bulged loops of 3 bases are separated by a stem of 4 bp. The chain is tRNA-splicing endonuclease from Thermococcus kodakarensis (strain ATCC BAA-918 / JCM 12380 / KOD1) (Pyrococcus kodakaraensis (strain KOD1)).